The sequence spans 611 residues: Dihydroxy-acid dehydratase (611 aa).

D81 contacts Mg(2+). C122 contacts [2Fe-2S] cluster. The Mg(2+) site is built by D123 and K124. K124 carries the post-translational modification N6-carboxylysine. Residue C195 coordinates [2Fe-2S] cluster. Position 491 (E491) interacts with Mg(2+). S517 (proton acceptor) is an active-site residue.

The protein belongs to the IlvD/Edd family. In terms of assembly, homodimer. Requires [2Fe-2S] cluster as cofactor. It depends on Mg(2+) as a cofactor.

The enzyme catalyses (2R)-2,3-dihydroxy-3-methylbutanoate = 3-methyl-2-oxobutanoate + H2O. It carries out the reaction (2R,3R)-2,3-dihydroxy-3-methylpentanoate = (S)-3-methyl-2-oxopentanoate + H2O. It functions in the pathway amino-acid biosynthesis; L-isoleucine biosynthesis; L-isoleucine from 2-oxobutanoate: step 3/4. Its pathway is amino-acid biosynthesis; L-valine biosynthesis; L-valine from pyruvate: step 3/4. In terms of biological role, functions in the biosynthesis of branched-chain amino acids. Catalyzes the dehydration of (2R,3R)-2,3-dihydroxy-3-methylpentanoate (2,3-dihydroxy-3-methylvalerate) into 2-oxo-3-methylpentanoate (2-oxo-3-methylvalerate) and of (2R)-2,3-dihydroxy-3-methylbutanoate (2,3-dihydroxyisovalerate) into 2-oxo-3-methylbutanoate (2-oxoisovalerate), the penultimate precursor to L-isoleucine and L-valine, respectively. This Allorhizobium ampelinum (strain ATCC BAA-846 / DSM 112012 / S4) (Agrobacterium vitis (strain S4)) protein is Dihydroxy-acid dehydratase.